Here is a 523-residue protein sequence, read N- to C-terminus: Ubiquitin carboxyl-terminal hydrolase 22-A (523 aa).

The segment at 4-121 adopts a UBP-type zinc-finger fold; the sequence is AGCSHVNSFK…KEEQRKAWKL (118 aa). Residues C6, H8, C46, C49, C59, C62, C67, H72, H76, H82, C95, and C98 each coordinate Zn(2+). The 345-residue stretch at 174 to 518 folds into the USP domain; the sequence is RGLINLGNTC…EGYLLFYHKQ (345 aa). C183 functions as the Nucleophile in the catalytic mechanism. H477 (proton acceptor) is an active-site residue.

The protein belongs to the peptidase C19 family. UBP8 subfamily. In terms of assembly, component of some SAGA transcription coactivator-HAT complexes.

It localises to the nucleus. It catalyses the reaction Thiol-dependent hydrolysis of ester, thioester, amide, peptide and isopeptide bonds formed by the C-terminal Gly of ubiquitin (a 76-residue protein attached to proteins as an intracellular targeting signal).. Functionally, histone deubiquitinating component of the transcription regulatory histone acetylation (HAT) complex SAGA. Catalyzes the deubiquitination of both histones H2A and H2B, thereby acting as a coactivator. Recruited to specific gene promoters by activators, where it is required for transcription. This chain is Ubiquitin carboxyl-terminal hydrolase 22-A (usp22-a), found in Xenopus laevis (African clawed frog).